Consider the following 302-residue polypeptide: Dihydroorotate dehydrogenase B (NAD(+)), catalytic subunit (302 aa).

FMN contacts are provided by residues Ser-23 and 47–48 (KS). Residues Lys-47, 71–75 (NAMGL), and Asn-125 each bind substrate. Residue Asn-125 participates in FMN binding. The Nucleophile role is filled by Cys-128. Positions 163 and 189 each coordinate FMN. 190-191 (NT) contributes to the substrate binding site. Residues Gly-215, 241–242 (GG), and 263–264 (GT) contribute to the FMN site.

The protein belongs to the dihydroorotate dehydrogenase family. Type 1 subfamily. As to quaternary structure, heterotetramer of 2 PyrK and 2 PyrD type B subunits. The cofactor is FMN.

The protein resides in the cytoplasm. It catalyses the reaction (S)-dihydroorotate + NAD(+) = orotate + NADH + H(+). It functions in the pathway pyrimidine metabolism; UMP biosynthesis via de novo pathway; orotate from (S)-dihydroorotate (NAD(+) route): step 1/1. Functionally, catalyzes the conversion of dihydroorotate to orotate with NAD(+) as electron acceptor. The protein is Dihydroorotate dehydrogenase B (NAD(+)), catalytic subunit (pyrD) of Thermococcus kodakarensis (strain ATCC BAA-918 / JCM 12380 / KOD1) (Pyrococcus kodakaraensis (strain KOD1)).